The primary structure comprises 182 residues: Ribosome-recycling factor (182 aa).

The segment at Val136–Glu160 is disordered.

This sequence belongs to the RRF family.

Its subcellular location is the cytoplasm. Functionally, responsible for the release of ribosomes from messenger RNA at the termination of protein biosynthesis. May increase the efficiency of translation by recycling ribosomes from one round of translation to another. This is Ribosome-recycling factor from Prochlorococcus marinus (strain NATL1A).